The chain runs to 530 residues: Cation channel sperm-associated protein 2 (530 aa).

Residues Met1–Pro108 lie on the Cytoplasmic side of the membrane. The chain crosses the membrane as a helical span at residues Leu109 to Leu131. Topologically, residues Leu132–Trp140 are extracellular. The helical transmembrane segment at Pro141–Leu166 threads the bilayer. Topologically, residues Ser167 to Ser175 are cytoplasmic. The chain crosses the membrane as a helical span at residues Ala176–Thr200. Topologically, residues Gly201–Ser203 are extracellular. A helical membrane pass occupies residues Val204 to Ala222. Residues Gln223–Lys239 lie on the Cytoplasmic side of the membrane. A helical membrane pass occupies residues Ser240–Val262. Over Phe263 to Ser281 the chain is Extracellular. The helical; Pore-forming intramembrane region spans Asp282–Phe294. Over Thr295–Arg314 the chain is Extracellular. The chain crosses the membrane as a helical span at residues Ile315–Val341. Topologically, residues Thr342–Lys530 are cytoplasmic. The interval Met378–Glu458 is disordered. The segment covering Lys429 to Tyr440 has biased composition (basic and acidic residues). Low complexity predominate over residues Ser442–Glu458.

It belongs to the cation channel sperm-associated (TC 1.A.1.19) family. As to quaternary structure, component of the CatSper complex or CatSpermasome composed of the core pore-forming members CATSPER1, CATSPER2, CATSPER3 and CATSPER4 as well as auxiliary members CATSPERB, CATSPERG, CATSPERD, CATSPERE, CATSPERZ, C2CD6/CATSPERT, TMEM249, TMEM262 and EFCAB9. HSPA1 may be an additional auxiliary complex member. The core complex members CATSPER1, CATSPER2, CATSPER3 and CATSPER4 form a heterotetrameric channel. The auxiliary CATSPERB, CATSPERG, CATSPERD and CATSPERE subunits form a pavilion-like structure over the pore which stabilizes the complex through interactions with CATSPER4, CATSPER3, CATSPER1 and CATSPER2 respectively. TMEM262/CATSPERH interacts with CATSPERB, further stabilizing the complex. C2CD6/CATSPERT interacts at least with CATSPERD and is required for targeting the CatSper complex in the flagellar membrane. Interacts with Ca(v)3.3/CACNA1I, leading to suppression of T-type calcium channel activity. In terms of tissue distribution, testis-specific.

It is found in the cell projection. Its subcellular location is the cilium. The protein localises to the flagellum membrane. The enzyme catalyses Ca(2+)(in) = Ca(2+)(out). Its activity is regulated as follows. The CatSper calcium channel is indirectly activated by extracellular progesterone and prostaglandins following the sequence: progesterone &gt; PGF1-alpha = PGE1 &gt; PGA1 &gt; PGE2 &gt;&gt; PGD2. The CatSper calcium channel is directly inhibited by endocannabinoid 2-arachidonoylglycerol (2AG). Indirect activation by progesterone takes place via the following mechanism: progesterone binds and activates the acylglycerol lipase ABHD2, which in turn mediates hydrolysis of 2AG inhibitor, relieving inhibition of the CatSper channel. The primary effect of progesterone activation is to shift voltage dependence towards more physiological, negative membrane potentials; it is not mediated by metabotropic receptors and second messengers. Sperm capacitation enhances the effect of progesterone by providing additional negative shift. Also activated by the elevation of intracellular pH. Its function is as follows. Pore-forming subunit of the CatSper complex, a sperm-specific voltage-gated calcium channel, that plays a central role in calcium-dependent physiological responses essential for successful fertilization, such as sperm hyperactivation, acrosome reaction and chemotaxis towards the oocyte. This Homo sapiens (Human) protein is Cation channel sperm-associated protein 2 (CATSPER2).